Here is a 129-residue protein sequence, read N- to C-terminus: Ergosterol biosynthetic protein 28 (129 aa).

Transmembrane regions (helical) follow at residues 4–24 (LGYW…FGFF), 46–66 (TFGV…FNLE), 71–91 (YLAT…EYLF), and 96–116 (TIAN…WMLL).

This sequence belongs to the ERG28 family.

It localises to the endoplasmic reticulum membrane. The chain is Ergosterol biosynthetic protein 28 from Arabidopsis thaliana (Mouse-ear cress).